The sequence spans 251 residues: uncharacterized protein (251 aa).

10-34 (ITGAGSGIGKKAAVMFAERGAKVAI) is a binding site for NADP(+). Position 139 (Ser-139) interacts with substrate. Residue Tyr-152 is the Proton acceptor of the active site.

It belongs to the short-chain dehydrogenases/reductases (SDR) family.

This is an uncharacterized protein from Thermotoga maritima (strain ATCC 43589 / DSM 3109 / JCM 10099 / NBRC 100826 / MSB8).